A 218-amino-acid chain; its full sequence is Ribose-5-phosphate isomerase A (218 aa).

Residues 28 to 31 (TGST), 81 to 84 (DGAD), and 94 to 97 (KGGG) contribute to the substrate site. The active-site Proton acceptor is glutamate 103. Lysine 121 is a binding site for substrate.

Belongs to the ribose 5-phosphate isomerase family. Homodimer.

It catalyses the reaction aldehydo-D-ribose 5-phosphate = D-ribulose 5-phosphate. It participates in carbohydrate degradation; pentose phosphate pathway; D-ribose 5-phosphate from D-ribulose 5-phosphate (non-oxidative stage): step 1/1. In terms of biological role, catalyzes the reversible conversion of ribose-5-phosphate to ribulose 5-phosphate. The chain is Ribose-5-phosphate isomerase A from Yersinia pseudotuberculosis serotype IB (strain PB1/+).